A 180-amino-acid polypeptide reads, in one-letter code: MFEATTILGYRGELNHKKFALIGGDGQVTLGNCVVKANATKIRSLYHNQVLSGFAGSTADAFSLFDMFERILESKKGDLFKSVVDFSKEWRKDKYLRRLEAMMIVLNFDHIFILSGMGDVLEAEDNKIAAIGSGGNYALSAARALDHFAHLEPRKLVEESLKIAGDLCIYTNTNIKILEL.

Thr-5 is a catalytic residue. 3 residues coordinate Na(+): Gly-165, Cys-168, and Thr-171.

Belongs to the peptidase T1B family. HslV subfamily. In terms of assembly, a double ring-shaped homohexamer of HslV is capped on each side by a ring-shaped HslU homohexamer. The assembly of the HslU/HslV complex is dependent on binding of ATP.

It localises to the cytoplasm. The catalysed reaction is ATP-dependent cleavage of peptide bonds with broad specificity.. With respect to regulation, allosterically activated by HslU binding. Functionally, protease subunit of a proteasome-like degradation complex believed to be a general protein degrading machinery. The polypeptide is ATP-dependent protease subunit HslV (Helicobacter pylori (strain ATCC 700392 / 26695) (Campylobacter pylori)).